Reading from the N-terminus, the 462-residue chain is L-seryl-tRNA(Sec) selenium transferase (462 aa).

N6-(pyridoxal phosphate)lysine is present on K292.

This sequence belongs to the SelA family. Requires pyridoxal 5'-phosphate as cofactor.

The protein resides in the cytoplasm. It catalyses the reaction L-seryl-tRNA(Sec) + selenophosphate + H(+) = L-selenocysteinyl-tRNA(Sec) + phosphate. The protein operates within aminoacyl-tRNA biosynthesis; selenocysteinyl-tRNA(Sec) biosynthesis; selenocysteinyl-tRNA(Sec) from L-seryl-tRNA(Sec) (bacterial route): step 1/1. In terms of biological role, converts seryl-tRNA(Sec) to selenocysteinyl-tRNA(Sec) required for selenoprotein biosynthesis. This chain is L-seryl-tRNA(Sec) selenium transferase, found in Geobacter sulfurreducens (strain ATCC 51573 / DSM 12127 / PCA).